We begin with the raw amino-acid sequence, 670 residues long: UvrABC system protein B (670 aa).

Positions E51 to R433 constitute a Helicase ATP-binding domain. Residue G64–T71 coordinates ATP. The Beta-hairpin signature appears at Y117 to I140. The region spanning D453–I612 is the Helicase C-terminal domain. The UVR domain occupies P631–E666.

The protein belongs to the UvrB family. As to quaternary structure, forms a heterotetramer with UvrA during the search for lesions. Interacts with UvrC in an incision complex.

It localises to the cytoplasm. The UvrABC repair system catalyzes the recognition and processing of DNA lesions. A damage recognition complex composed of 2 UvrA and 2 UvrB subunits scans DNA for abnormalities. Upon binding of the UvrA(2)B(2) complex to a putative damaged site, the DNA wraps around one UvrB monomer. DNA wrap is dependent on ATP binding by UvrB and probably causes local melting of the DNA helix, facilitating insertion of UvrB beta-hairpin between the DNA strands. Then UvrB probes one DNA strand for the presence of a lesion. If a lesion is found the UvrA subunits dissociate and the UvrB-DNA preincision complex is formed. This complex is subsequently bound by UvrC and the second UvrB is released. If no lesion is found, the DNA wraps around the other UvrB subunit that will check the other stand for damage. This chain is UvrABC system protein B, found in Methanosarcina acetivorans (strain ATCC 35395 / DSM 2834 / JCM 12185 / C2A).